The chain runs to 78 residues: Putative membrane protein insertion efficiency factor (78 aa).

The protein belongs to the UPF0161 family.

The protein resides in the cell membrane. Its function is as follows. Could be involved in insertion of integral membrane proteins into the membrane. The sequence is that of Putative membrane protein insertion efficiency factor from Bacillus thuringiensis subsp. konkukian (strain 97-27).